Reading from the N-terminus, the 155-residue chain is Protein SprT-like (155 aa).

In terms of domain architecture, SprT-like spans Gln7 to Gln144. His67 provides a ligand contact to Zn(2+). The active site involves Glu68. Position 71 (His71) interacts with Zn(2+).

It belongs to the SprT family. The cofactor is Zn(2+).

Its subcellular location is the cytoplasm. This is Protein SprT-like from Listeria welshimeri serovar 6b (strain ATCC 35897 / DSM 20650 / CCUG 15529 / CIP 8149 / NCTC 11857 / SLCC 5334 / V8).